The following is a 340-amino-acid chain: Uroporphyrinogen decarboxylase (340 aa).

Substrate-binding positions include 23 to 27 (RQAGR), Asp-72, Tyr-147, Thr-202, and His-316.

This sequence belongs to the uroporphyrinogen decarboxylase family. In terms of assembly, homodimer.

It localises to the cytoplasm. It carries out the reaction uroporphyrinogen III + 4 H(+) = coproporphyrinogen III + 4 CO2. Its pathway is porphyrin-containing compound metabolism; protoporphyrin-IX biosynthesis; coproporphyrinogen-III from 5-aminolevulinate: step 4/4. Functionally, catalyzes the decarboxylation of four acetate groups of uroporphyrinogen-III to yield coproporphyrinogen-III. The sequence is that of Uroporphyrinogen decarboxylase from Trichlorobacter lovleyi (strain ATCC BAA-1151 / DSM 17278 / SZ) (Geobacter lovleyi).